The chain runs to 324 residues: Putative F-box/kelch-repeat protein At5g28160 (324 aa).

The 48-residue stretch at 7-54 (RPSFLSLPDEIILSCLARISRSYYPKLSLVCKTFRTLLISNELIVARL) folds into the F-box domain. Residues 170-216 (KIYVMGGCMADESVNWGEVFDIKTQTWEALPDPGPEFRFSSIRKIDV) form a Kelch repeat.

The sequence is that of Putative F-box/kelch-repeat protein At5g28160 from Arabidopsis thaliana (Mouse-ear cress).